The chain runs to 155 residues: Small ribosomal subunit protein uS7cz/uS7cy (155 aa).

Belongs to the universal ribosomal protein uS7 family. Part of the 30S ribosomal subunit.

The protein resides in the plastid. In terms of biological role, one of the primary rRNA binding proteins, it binds directly to 16S rRNA where it nucleates assembly of the head domain of the 30S subunit. This chain is Small ribosomal subunit protein uS7cz/uS7cy (rps7-A), found in Cuscuta exaltata (Tall dodder).